The sequence spans 94 residues: Small ribosomal subunit protein uS19 (94 aa).

The protein belongs to the universal ribosomal protein uS19 family.

Functionally, protein S19 forms a complex with S13 that binds strongly to the 16S ribosomal RNA. This is Small ribosomal subunit protein uS19 from Pelotomaculum thermopropionicum (strain DSM 13744 / JCM 10971 / SI).